Reading from the N-terminus, the 358-residue chain is Protein FAM187B (358 aa).

Positions 1-17 (MLATLWLVGLSLPMLWA) are cleaved as a signal peptide. Residues 18–322 (QRLISCPYKN…DKADSVLRRL (305 aa)) are Extracellular-facing. N-linked (GlcNAc...) asparagine glycosylation is present at Asn127. The chain crosses the membrane as a helical span at residues 323-343 (KLMVLSISVLAVGGLLCKVVF). At 344-358 (RPVCGKKRSQVLLVK) the chain is on the cytoplasmic side.

Belongs to the FAM187 family.

Its subcellular location is the membrane. The sequence is that of Protein FAM187B (Fam187b) from Mus musculus (Mouse).